A 245-amino-acid polypeptide reads, in one-letter code: 1-(5-phosphoribosyl)-5-[(5-phosphoribosylamino)methylideneamino] imidazole-4-carboxamide isomerase (245 aa).

Catalysis depends on Asp8, which acts as the Proton acceptor. The active-site Proton donor is the Asp130.

Belongs to the HisA/HisF family.

The protein resides in the cytoplasm. The catalysed reaction is 1-(5-phospho-beta-D-ribosyl)-5-[(5-phospho-beta-D-ribosylamino)methylideneamino]imidazole-4-carboxamide = 5-[(5-phospho-1-deoxy-D-ribulos-1-ylimino)methylamino]-1-(5-phospho-beta-D-ribosyl)imidazole-4-carboxamide. Its pathway is amino-acid biosynthesis; L-histidine biosynthesis; L-histidine from 5-phospho-alpha-D-ribose 1-diphosphate: step 4/9. The sequence is that of 1-(5-phosphoribosyl)-5-[(5-phosphoribosylamino)methylideneamino] imidazole-4-carboxamide isomerase from Pseudomonas entomophila (strain L48).